Here is a 535-residue protein sequence, read N- to C-terminus: Doublesex- and mab-3-related transcription factor A2 (535 aa).

The segment at residues 69 to 116 (CARCRNHGVVSALKGHKRYCRWKDCLCAKCTLIAERQRVMAAQVALRR) is a DNA-binding region (DM). Positions 200–315 (LQAGRPGSPQ…GGPGPRQRTP (116 aa)) are disordered. The DMA domain occupies 313-348 (RTPLDILTRVFPGHRRGVLELVLQGCGGDVVQAIEQ).

It belongs to the DMRT family.

Its subcellular location is the nucleus. In terms of biological role, may be involved in sexual development. This is Doublesex- and mab-3-related transcription factor A2 (DMRTA2) from Bos taurus (Bovine).